Reading from the N-terminus, the 544-residue chain is Secreted aspartic protease 9 (544 aa).

The signal sequence occupies residues 1–17 (MRLNSVALLSLVATALA). Residues 31–50 (GESKDDLSPEDDSNPRFVKR) are disordered. The Peptidase A1 domain occupies 65 to 479 (YMATLKIGSN…DLDDYEVSLA (415 aa)). Residue 83–85 (DTG) coordinates pepstatin A. A disulfide bridge connects residues cysteine 98 and cysteine 195. Threonine 167 is a catalytic residue. N-linked (GlcNAc...) asparagine glycosylation is found at asparagine 212, asparagine 240, and asparagine 252. Aspartate 371 is an active-site residue. 371 to 375 (DTGST) contributes to the pepstatin A binding site. Cysteine 406 and cysteine 441 form a disulfide bridge. 2 N-linked (GlcNAc...) asparagine glycosylation sites follow: asparagine 422 and asparagine 499. Residues 500-520 (SSGSGTTSSSGTSTSTSTRHS) form a disordered region.

Belongs to the peptidase A1 family. Monomer. Post-translationally, the GPI-anchor is attached to the protein in the endoplasmic reticulum and serves to target the protein to the cell surface. There, the glucosamine-inositol phospholipid moiety is cleaved off and the GPI-modified mannoprotein is covalently attached via its lipidless GPI glycan remnant to the 1,6-beta-glucan of the outer cell wall layer.

The protein localises to the cell membrane. It localises to the secreted. It is found in the cell wall. The enzyme catalyses Preferential cleavage at the carboxyl of hydrophobic amino acids, but fails to cleave 15-Leu-|-Tyr-16, 16-Tyr-|-Leu-17 and 24-Phe-|-Phe-25 of insulin B chain. Activates trypsinogen, and degrades keratin.. In terms of biological role, secreted aspartic peptidases (SAPs) are a group of ten acidic hydrolases considered as key virulence factors. These enzymes supply the fungus with nutrient amino acids as well as are able to degrade the selected host's proteins involved in the immune defense. Moreover, acts toward human hemoglobin though limited proteolysis to generate a variety of antimicrobial hemocidins, enabling to compete with the other microorganisms of the same physiological niche using the microbicidal peptides generated from the host protein. Functionally, plays a key role in defense against host by cleaving histatin-5 (Hst 5), a peptide from human saliva that carries out fungicidal activity. The cleavage rate decreases in an order of SAP2 &gt; SAP9 &gt; SAP3 &gt; SAP7 &gt; SAP4 &gt; SAP1 &gt; SAP8. The first cleavage occurs between residues 'Lys-17' and 'His-18' of Hst 5, giving DSHAKRHHGYKRKFHEK and HHSHRGY peptides. Simultaneously, the DSHAKRHHGYKRK peptide is also formed. Further fragmentation by SAP9 results in FHEK product. The polypeptide is Secreted aspartic protease 9 (Candida albicans (Yeast)).